A 213-amino-acid polypeptide reads, in one-letter code: Outer-membrane lipoprotein carrier protein (213 aa).

An N-terminal signal peptide occupies residues 1 to 18 (MKYFATICIAAYAGLAGA).

Belongs to the LolA family. Monomer.

It is found in the periplasm. Its function is as follows. Participates in the translocation of lipoproteins from the inner membrane to the outer membrane. Only forms a complex with a lipoprotein if the residue after the N-terminal Cys is not an aspartate (The Asp acts as a targeting signal to indicate that the lipoprotein should stay in the inner membrane). The protein is Outer-membrane lipoprotein carrier protein of Albidiferax ferrireducens (strain ATCC BAA-621 / DSM 15236 / T118) (Rhodoferax ferrireducens).